Consider the following 508-residue polypeptide: UTP--glucose-1-phosphate uridylyltransferase (508 aa).

Residue serine 2 is modified to Blocked amino end (Ser). Serine 13 is subject to Phosphoserine. UTP-binding positions include 113–116, lysine 127, glutamine 190, and glycine 222; that span reads LNGG. Position 115–116 (115–116) interacts with substrate; it reads GG. Lysine 127 provides a ligand contact to Mg(2+). Substrate is bound by residues histidine 223 and 251–253; that span reads NID. 2 residues coordinate UTP: aspartate 253 and lysine 396. Aspartate 253 provides a ligand contact to Mg(2+). Lysine 396 is an active-site residue. Residue threonine 426 is modified to Phosphothreonine. At serine 434 the chain carries Phosphoserine. An N6-acetyllysine modification is found at lysine 438. Phosphoserine occurs at positions 448 and 461. Residues 457–508 form an oligomerization region; the sequence is HLTVSGDVTFGKNVSLKGTVIIIANHGDRIDIPPGAVLENKIVSGNLRILDH. The tract at residues 502–503 is critical for end-to-end subunit interaction; that stretch reads NL.

Belongs to the UDPGP type 1 family. In terms of assembly, homooctamer.

The protein resides in the cytoplasm. It carries out the reaction alpha-D-glucose 1-phosphate + UTP + H(+) = UDP-alpha-D-glucose + diphosphate. It participates in glycan biosynthesis; glycogen biosynthesis. In terms of biological role, UTP--glucose-1-phosphate uridylyltransferase catalyzing the conversion of glucose-1-phosphate into UDP-glucose, a crucial precursor for the production of glycogen. The protein is UTP--glucose-1-phosphate uridylyltransferase (UGP2) of Bos taurus (Bovine).